A 342-amino-acid polypeptide reads, in one-letter code: Lumican (342 aa).

Residues 1 to 18 (MNLGVFPLLLALIGGASS) form the signal peptide. Sulfotyrosine occurs at positions 20, 23, and 34. One can recognise an LRRNT domain in the interval 32–70 (ALYGRSSPNCAPECNCPESYPSAMYCDELKLKSVPMVPP). 8 LRR repeats span residues 71 to 92 (GIKYLYLRNNQIDHIDDKAFEN), 95 to 118 (DLQWLILDHNLLENSKIKGKVFSK), 121 to 141 (QLKKLHINYNNLTESVGPLPK), 142 to 163 (SLVDLQLTNNKISKLGSFDGLV), 164 to 185 (NLTFIHLQHNQLKEDAVSAALK), 189 to 209 (SLEYLDLSFNQMTKLPSGLPV), 210 to 231 (SLLTLYLDNNKISNIPDEYFKR), and 234 to 254 (ALQYLRLSHNELADSGVPGNS). Asn92 is a glycosylation site (N-linked (GlcNAc...) (keratan sulfate) asparagine). A glycan (N-linked (GlcNAc...) (keratan sulfate) asparagine) is linked at Asn131. The N-linked (GlcNAc...) (keratan sulfate) asparagine glycan is linked to Asn164. N-linked (GlcNAc...) (keratan sulfate) asparagine glycosylation is present at Asn256. 2 LRR repeats span residues 259–280 (SLLELDLSYNKLKSIPTVNENL) and 281–300 (ENYYLEVNELEKFDVKSFCK). A disulfide bond links Cys299 and Cys332. A Phosphoserine modification is found at Ser308. The LRR 11 repeat unit spans residues 309–330 (KIKHLRLDGNHITQTSLPPDMY).

Belongs to the small leucine-rich proteoglycan (SLRP) family. SLRP class II subfamily. As to quaternary structure, binds to laminin. Post-translationally, sulfated on tyrosine residue(s). Contains keratan sulfate. In terms of tissue distribution, cornea and other tissues.

The protein localises to the secreted. Its subcellular location is the extracellular space. The protein resides in the extracellular matrix. This Bos taurus (Bovine) protein is Lumican (LUM).